A 212-amino-acid polypeptide reads, in one-letter code: Outer-membrane lipoprotein carrier protein (212 aa).

Residues 1–29 (MSSARRRALGFSFQALLLCAAGWHGAAQA) form the signal peptide.

Belongs to the LolA family. As to quaternary structure, monomer.

The protein resides in the periplasm. Its function is as follows. Participates in the translocation of lipoproteins from the inner membrane to the outer membrane. Only forms a complex with a lipoprotein if the residue after the N-terminal Cys is not an aspartate (The Asp acts as a targeting signal to indicate that the lipoprotein should stay in the inner membrane). This is Outer-membrane lipoprotein carrier protein from Leptothrix cholodnii (strain ATCC 51168 / LMG 8142 / SP-6) (Leptothrix discophora (strain SP-6)).